Consider the following 214-residue polypeptide: tRNA (guanine-N(7)-)-methyltransferase (214 aa).

Glu43, Glu68, Asp95, and Asp117 together coordinate S-adenosyl-L-methionine. Residue Asp117 is part of the active site. Substrate contacts are provided by residues Lys121, Asp153, and 190-193 (TEYE).

Belongs to the class I-like SAM-binding methyltransferase superfamily. TrmB family.

The enzyme catalyses guanosine(46) in tRNA + S-adenosyl-L-methionine = N(7)-methylguanosine(46) in tRNA + S-adenosyl-L-homocysteine. Its pathway is tRNA modification; N(7)-methylguanine-tRNA biosynthesis. In terms of biological role, catalyzes the formation of N(7)-methylguanine at position 46 (m7G46) in tRNA. This Staphylococcus aureus (strain USA300) protein is tRNA (guanine-N(7)-)-methyltransferase.